A 164-amino-acid chain; its full sequence is MRLTSKGRYAVTAMLDVALHSQEGPVPLADISERQGISLSYLEQLFSRLRKNGLVASVRGPGGGYLLGKNANEIAVGMVISAVDESVDATRCQGRESCQGGDRCLTHTLWRDLSDRITDFLNNITLDELVNNKEVLNVADRQDTDTRRTANGRIQETINVNLRA.

An HTH rrf2-type domain is found at Arg2–Asn131. The segment at residues Leu28–Lys51 is a DNA-binding region (H-T-H motif). Residues Cys92, Cys98, and Cys104 each coordinate [2Fe-2S] cluster.

The cofactor is [2Fe-2S] cluster.

Its function is as follows. Regulates the transcription of several operons and genes involved in the biogenesis of Fe-S clusters and Fe-S-containing proteins. In Pectobacterium atrosepticum (strain SCRI 1043 / ATCC BAA-672) (Erwinia carotovora subsp. atroseptica), this protein is HTH-type transcriptional regulator IscR.